The primary structure comprises 259 residues: Imidazole glycerol phosphate synthase subunit HisF (259 aa).

Catalysis depends on residues Asp11 and Asp130.

Belongs to the HisA/HisF family. In terms of assembly, heterodimer of HisH and HisF.

The protein resides in the cytoplasm. The catalysed reaction is 5-[(5-phospho-1-deoxy-D-ribulos-1-ylimino)methylamino]-1-(5-phospho-beta-D-ribosyl)imidazole-4-carboxamide + L-glutamine = D-erythro-1-(imidazol-4-yl)glycerol 3-phosphate + 5-amino-1-(5-phospho-beta-D-ribosyl)imidazole-4-carboxamide + L-glutamate + H(+). It participates in amino-acid biosynthesis; L-histidine biosynthesis; L-histidine from 5-phospho-alpha-D-ribose 1-diphosphate: step 5/9. In terms of biological role, IGPS catalyzes the conversion of PRFAR and glutamine to IGP, AICAR and glutamate. The HisF subunit catalyzes the cyclization activity that produces IGP and AICAR from PRFAR using the ammonia provided by the HisH subunit. The polypeptide is Imidazole glycerol phosphate synthase subunit HisF (Desulfovibrio desulfuricans (strain ATCC 27774 / DSM 6949 / MB)).